The primary structure comprises 706 residues: DNA helicase/primase complex-associated protein (706 aa).

Positions C203–R249 are disordered. Residues G217–S236 are compositionally biased toward gly residues.

This sequence belongs to the herpesviridae HEPA family. Associates with the primase and the helicase to form the helicase-primase complex. Interacts with the origin-binding protein. Interacts with the polymerase catalytic subunit.

It localises to the host nucleus. Its function is as follows. Component of the helicase/primase complex. Unwinds the DNA at the replication forks and generates single-stranded DNA for both leading and lagging strand synthesis. The primase synthesizes short RNA primers on the lagging strand that the polymerase presumably elongates using dNTPs. The primase-associated factor has no known catalytic activity in the complex and may serve to facilitate the formation of the replisome by directly interacting with the origin-binding protein and the polymerase. In Equus caballus (Horse), this protein is DNA helicase/primase complex-associated protein (40).